Reading from the N-terminus, the 329-residue chain is Transcription factor RF2b (329 aa).

Disordered stretches follow at residues 1-24 and 62-97; these read MQEP…RSEV and SSGP…DGSG. In terms of domain architecture, bZIP spans 132 to 195; sequence DPKRAKRILA…TGLSAENAEL (64 aa). The tract at residues 134 to 155 is basic motif; it reads KRAKRILANRQSAARSKERKAR. Positions 160-174 are leucine-zipper; that stretch reads LERKVQTLQTEATTL. Residues 260–303 are disordered; that stretch reads RQNGGTQLPPQFQPPRPNVPNHMLSHPNGLQDIMQQDPLGRLQG.

The protein belongs to the bZIP family. In terms of assembly, binds DNA as a homodimer or as a heterodimer with RF2a. The heterodimer binds stronger to DNA than the homodimer. In terms of tissue distribution, expressed at high levels in roots, low level in leaf sheath, but not in leaf blade. Predominantly expressed in vascular tissues.

The protein localises to the nucleus. Its function is as follows. Transcription factor probably involved in vascular development and shoot tissue organization. Binds to the DNA sequence 5'-CCGAGTGTGCCCCTGG-3' present in the promoter region Box II of the phloem-specific rice tungro bacilliform virus (RTBV) promoter. May regulate tissue-specific expression of the RTBV promoter and virus replication. In Oryza sativa subsp. japonica (Rice), this protein is Transcription factor RF2b (RF2b).